The sequence spans 383 residues: Mannitol-1-phosphate 5-dehydrogenase (383 aa).

Residue 3 to 14 (ALHFGAGNIGRG) participates in NAD(+) binding.

Belongs to the mannitol dehydrogenase family.

It carries out the reaction D-mannitol 1-phosphate + NAD(+) = beta-D-fructose 6-phosphate + NADH + H(+). This is Mannitol-1-phosphate 5-dehydrogenase from Serratia proteamaculans (strain 568).